The primary structure comprises 312 residues: Acyl-CoA C20 Delta5-desaturase (312 aa).

2 consecutive transmembrane segments (helical) span residues 45–65 (VFHILFIGGLHVLCLFAPSTF) and 69–89 (SFWVCFALYAICGVFGTTLSF). Fe cation-binding residues include His-90, His-95, His-127, His-130, and His-131. The Histidine box-1 signature appears at 90–95 (HRNLTH). The Histidine box-2 motif lies at 127 to 131 (HRYHH). The helical transmembrane segment at 193-213 (LQAALLYLFGGFPFIVWGMAV) threads the bilayer. Fe cation contacts are provided by His-230, His-259, His-262, and His-263. The Histidine box-3 motif lies at 259–263 (HNNHH).

It belongs to the fatty acid desaturase type 1 family. Requires Fe(2+) as cofactor.

The protein resides in the membrane. The catalysed reaction is (11Z,14Z)-eicosadienoyl-CoA + AH2 + O2 = (5Z,11Z,14Z)-eicosatrienoyl-CoA + A + 2 H2O. It carries out the reaction (11Z,14Z,17Z)-eicosatrienoyl-CoA + AH2 + O2 = (5Z,11Z,14Z,17Z)-eicosatetraenoyl-CoA + A + 2 H2O. It participates in lipid metabolism; polyunsaturated fatty acid biosynthesis. Catalyzes the desaturation of 20:2Delta(11,14) and 20:3Delta(11,14,17) to generate sciadonic acid (20:3Delta(5,11,14)) and juniperonic acid (20:4Delta(5,11,14,17)). The protein is Acyl-CoA C20 Delta5-desaturase of Anemone leveillei (Windflower).